A 317-amino-acid chain; its full sequence is 4-hydroxy-3-methylbut-2-enyl diphosphate reductase (317 aa).

Cys12 contacts [4Fe-4S] cluster. Residues His43 and His81 each contribute to the (2E)-4-hydroxy-3-methylbut-2-enyl diphosphate site. Residues His43 and His81 each coordinate dimethylallyl diphosphate. 2 residues coordinate isopentenyl diphosphate: His43 and His81. Position 103 (Cys103) interacts with [4Fe-4S] cluster. His131 is a binding site for (2E)-4-hydroxy-3-methylbut-2-enyl diphosphate. His131 is a binding site for dimethylallyl diphosphate. His131 contributes to the isopentenyl diphosphate binding site. Residue Glu133 is the Proton donor of the active site. Residue Thr172 participates in (2E)-4-hydroxy-3-methylbut-2-enyl diphosphate binding. Cys200 contacts [4Fe-4S] cluster. Positions 228, 230, and 273 each coordinate (2E)-4-hydroxy-3-methylbut-2-enyl diphosphate. Ser228, Asn230, and Ser273 together coordinate dimethylallyl diphosphate. Positions 228, 230, and 273 each coordinate isopentenyl diphosphate.

Belongs to the IspH family. [4Fe-4S] cluster serves as cofactor.

It carries out the reaction isopentenyl diphosphate + 2 oxidized [2Fe-2S]-[ferredoxin] + H2O = (2E)-4-hydroxy-3-methylbut-2-enyl diphosphate + 2 reduced [2Fe-2S]-[ferredoxin] + 2 H(+). The catalysed reaction is dimethylallyl diphosphate + 2 oxidized [2Fe-2S]-[ferredoxin] + H2O = (2E)-4-hydroxy-3-methylbut-2-enyl diphosphate + 2 reduced [2Fe-2S]-[ferredoxin] + 2 H(+). It functions in the pathway isoprenoid biosynthesis; dimethylallyl diphosphate biosynthesis; dimethylallyl diphosphate from (2E)-4-hydroxy-3-methylbutenyl diphosphate: step 1/1. The protein operates within isoprenoid biosynthesis; isopentenyl diphosphate biosynthesis via DXP pathway; isopentenyl diphosphate from 1-deoxy-D-xylulose 5-phosphate: step 6/6. Functionally, catalyzes the conversion of 1-hydroxy-2-methyl-2-(E)-butenyl 4-diphosphate (HMBPP) into a mixture of isopentenyl diphosphate (IPP) and dimethylallyl diphosphate (DMAPP). Acts in the terminal step of the DOXP/MEP pathway for isoprenoid precursor biosynthesis. In Exiguobacterium sp. (strain ATCC BAA-1283 / AT1b), this protein is 4-hydroxy-3-methylbut-2-enyl diphosphate reductase.